A 156-amino-acid chain; its full sequence is Ribosomal RNA large subunit methyltransferase H (156 aa).

S-adenosyl-L-methionine-binding positions include L73, G104, and 123 to 128 (ISSMTL).

It belongs to the RNA methyltransferase RlmH family. Homodimer.

The protein resides in the cytoplasm. The catalysed reaction is pseudouridine(1915) in 23S rRNA + S-adenosyl-L-methionine = N(3)-methylpseudouridine(1915) in 23S rRNA + S-adenosyl-L-homocysteine + H(+). Its function is as follows. Specifically methylates the pseudouridine at position 1915 (m3Psi1915) in 23S rRNA. The sequence is that of Ribosomal RNA large subunit methyltransferase H from Janthinobacterium sp. (strain Marseille) (Minibacterium massiliensis).